A 352-amino-acid chain; its full sequence is C-glycoside deglycosidase alpha subunit (352 aa).

Residue glutamate 147 participates in Mn(2+) binding. Catalysis depends on histidine 149, which acts as the Proton acceptor. Aspartate 179, histidine 269, and glutamate 305 together coordinate Mn(2+).

The protein belongs to the C-glycoside deglycosidase alpha subunit family. In terms of assembly, heterodimer composed of an alpha subunit (CarB2) and a beta subunit (CarC2). The cofactor is a divalent metal cation.

It carries out the reaction 3''-dehydroorientin = 1,5-anhydro-D-erythro-hex-1-en-3-ulose + luteolin. Its activity is regulated as follows. Activity is strongly reduced in the presence of chelating agents. Its function is as follows. Carbon-carbon bond-cleaving enzyme which participates in the metabolism of C-glycosides. Acts on the C8-glycosylated compound 3''-dehydroorientin (3''-oxo-orientin). The chain is C-glycoside deglycosidase alpha subunit from Arthrobacter globiformis (strain ATCC 8010 / DSM 20124 / JCM 1332 / NBRC 12137 / NCIMB 8907 / NRRL B-2979 / 168).